The primary structure comprises 744 residues: Cell division cycle protein 27 homolog B (744 aa).

Residues 101 to 134 form a TPR 1 repeat; it reads AAGHYLLGLIYKYTDRRKNAAQQFKQSLTIDPLL. Residues 180–199 are compositionally biased toward polar residues; that stretch reads NEERNSTSTKNTSSEDYSPR. Disordered stretches follow at residues 180 to 218 and 359 to 390; these read NEER…NFHS and ENMD…NDQE. The segment covering 363–374 has biased composition (basic and acidic residues); the sequence is EGVRGEPFDDSR. Polar residues predominate over residues 375–387; the sequence is PNTASTTGSMASN. TPR repeat units follow at residues 450–483, 518–551, 553–585, 587–619, 621–653, 655–687, and 688–721; these read GWVL…SPYC, PQSW…NPRF, YAHT…DTRH, NAWY…NPSS, VIMS…DRKN, LPMY…APSE, and SSVY…KPPA.

This sequence belongs to the APC3/CDC27 family. In terms of assembly, the APC/C is composed of at least 10 subunits. Can homodimerize. Interacts with APC2, APC10, FZR2 and FZR3. Interacts with PANS1. Interacts with SAMBA. Specifically expressed in dividing and elongating cells.

It is found in the nucleus. It participates in protein modification; protein ubiquitination. Functionally, component of the anaphase promoting complex/cyclosome (APC/C), a cell cycle-regulated E3 ubiquitin-protein ligase complex that controls progression through mitosis and the G1 phase of the cell cycle. The APC/C complex controls several key steps in the cell cycle by mediating ubiquitination and subsequent degradation of target proteins such as cyclins. The APC/C complex is required for the female gametophyte development and is involved in several aspect of development by controlling cell division and cell elongation. Involved in the control of endoreduplication. Functionally redundant with CDC27A in the control of gametophyte development. The protein is Cell division cycle protein 27 homolog B (CDC27B) of Arabidopsis thaliana (Mouse-ear cress).